The following is an 832-amino-acid chain: pre-rRNA 2'-O-ribose RNA methyltransferase FTSJ3 (832 aa).

Glycine 56, tryptophan 58, aspartate 76, aspartate 92, and aspartate 117 together coordinate S-adenosyl-L-methionine. Lysine 157 (proton acceptor) is an active-site residue. Disordered stretches follow at residues 332 to 358 (INLS…ADEM), 485 to 523 (RLER…LEEK), and 546 to 631 (DADE…GLVE). Basic and acidic residues-rich tracts occupy residues 345–358 (EEEK…ADEM) and 485–495 (RLERERREQGV). A compositionally biased stretch (acidic residues) spans 503-514 (EEEEEEEEEEEN). Residues 570–579 (KTKKKGQKKK) show a composition bias toward basic residues. The span at 600 to 618 (AEAEAEQSSDDDSSSDEEG) shows a compositional bias: acidic residues. The stretch at 726–758 (IKKVAEAKARKKRRMLKKMEQMKKKAEAVVSTV) forms a coiled coil. A disordered region spans residues 795–832 (GPRVRRPPGVKGQFKVVDSRLKKDVRAQKRKEQKKRRK). The segment covering 811-821 (VDSRLKKDVRA) has biased composition (basic and acidic residues). Residues 822 to 832 (QKRKEQKKRRK) show a composition bias toward basic residues.

The protein belongs to the class I-like SAM-binding methyltransferase superfamily. RNA methyltransferase RlmE family. SPB1 subfamily. In terms of assembly, interacts with NIP7.

It is found in the nucleus. It localises to the nucleolus. The catalysed reaction is a ribonucleotide in rRNA + S-adenosyl-L-methionine = a 2'-O-methylribonucleotide in rRNA + S-adenosyl-L-homocysteine + H(+). Its function is as follows. RNA 2'-O-methyltransferase involved in the processing of the 34S pre-rRNA to 18S rRNA and in 40S ribosomal subunit formation. The protein is pre-rRNA 2'-O-ribose RNA methyltransferase FTSJ3 of Gallus gallus (Chicken).